A 116-amino-acid polypeptide reads, in one-letter code: MPKVSTKDSKKSTASDAKKRTKKDPNKPKRALSAYMFFVQDYRERIKTENPEATFGDVGKLLGIKWREMNENEKKPYEAKAKADKERADRENADYKAEGKASKKAAKADEESDDDE.

Composition is skewed to basic and acidic residues over residues 1 to 27 (MPKV…DPNK) and 68 to 109 (EMNE…AKAD). Disordered regions lie at residues 1 to 32 (MPKV…KRAL) and 68 to 116 (EMNE…DDDE). Positions 28–96 (PKRALSAYMF…RADRENADYK (69 aa)) form a DNA-binding region, HMG box.

It belongs to the NHP6 family. As to quaternary structure, weakly associates with the stable SPT16-POB3 heterodimer to form the FACT complex.

The protein localises to the nucleus. The protein resides in the chromosome. Its function is as follows. DNA-binding protein that induces severe bending of DNA. Required for DNA-binding by the FACT complex, a general chromatin factor that acts to reorganize nucleosomes. The FACT complex is involved in multiple processes that require DNA as a template such as mRNA elongation, DNA replication and DNA repair. Also augments the fidelity of transcription by RNA polymerase III independently of any role in the FACT complex. This is Non-histone chromosomal protein 6 (NHP6) from Cryptococcus neoformans var. neoformans serotype D (strain B-3501A) (Filobasidiella neoformans).